A 469-amino-acid polypeptide reads, in one-letter code: tRNA(Ile)-lysidine synthase (469 aa).

26 to 31 (SGGPDS) is a binding site for ATP.

The protein belongs to the tRNA(Ile)-lysidine synthase family.

It is found in the cytoplasm. The enzyme catalyses cytidine(34) in tRNA(Ile2) + L-lysine + ATP = lysidine(34) in tRNA(Ile2) + AMP + diphosphate + H(+). Its function is as follows. Ligates lysine onto the cytidine present at position 34 of the AUA codon-specific tRNA(Ile) that contains the anticodon CAU, in an ATP-dependent manner. Cytidine is converted to lysidine, thus changing the amino acid specificity of the tRNA from methionine to isoleucine. The polypeptide is tRNA(Ile)-lysidine synthase (Clostridium perfringens (strain 13 / Type A)).